An 840-amino-acid polypeptide reads, in one-letter code: Anaphase-promoting complex subunit CDC16 (840 aa).

Disordered stretches follow at residues 67–97 (AART…TSPY) and 173–212 (GVVR…TTTT). TPR repeat units follow at residues 229 to 260 (AIER…YNIS), 263 to 288 (PDDA…LITR), and 296 to 319 (ILCR…LDVI). A disordered region spans residues 329–350 (PSTTAANTMSNNGNNSNTSQPV). Over residues 330 to 347 (STTAANTMSNNGNNSNTS) the composition is skewed to low complexity. TPR repeat units lie at residues 357–388 (MESS…AILV), 393–416 (FEAF…LFDS), 426–454 (KEIM…EILA), 464–492 (DVVR…VLEN), 499–526 (ILPA…LAET), 531–560 (AITW…SSIL), 565–593 (AAAW…TASR), 600–628 (LPKL…AYDI), 633–665 (PLVL…VVKD), 671–703 (RTTI…VLEK), and 708–737 (SEIH…SLYL). The segment at 802–840 (RTQKEIFDQNNKALRKGGHDSKTGSNNADDDFDADMELE) is disordered. Acidic residues predominate over residues 829-840 (ADDDFDADMELE).

This sequence belongs to the APC6/CDC16 family. As to quaternary structure, the APC/C is composed of at least 13 subunits that stay tightly associated throughout the cell cycle: APC1, APC2, APC4, APC5, APC9, APC11, CDC16, CDC23, CDC26, CDC27, DOC1, MND2 and SWM1. Interacts with AMA1. Phosphorylated by CDC28, which is required for the early mitotic activity of the APC/C in its CDC20-bound form.

It is found in the nucleus. It participates in protein modification; protein ubiquitination. In terms of biological role, component of the anaphase promoting complex/cyclosome (APC/C), a cell cycle-regulated E3 ubiquitin-protein ligase complex that controls progression through mitosis and the G1 phase of the cell cycle. The APC/C is thought to confer substrate specificity and, in the presence of ubiquitin-conjugating E2 enzymes, it catalyzes the formation of protein-ubiquitin conjugates that are subsequently degraded by the 26S proteasome. In early mitosis, the APC/C is activated by CDC20 and targets securin PDS1, the B-type cyclin CLB5, and other anaphase inhibitory proteins for proteolysis, thereby triggering the separation of sister chromatids at the metaphase-to-anaphase transition. In late mitosis and in G1, degradation of CLB5 allows activation of the APC/C by CDH1, which is needed to destroy CDC20 and the B-type cyclin CLB2 to allow exit from mitosis and creating the low CDK state necessary for cytokinesis and for reforming prereplicative complexes in G1 prior to another round of replication. The polypeptide is Anaphase-promoting complex subunit CDC16 (CDC16) (Saccharomyces cerevisiae (strain ATCC 204508 / S288c) (Baker's yeast)).